The sequence spans 778 residues: MLLTCTNSLKISSQAKEWESKTLTGMSLEQLNKRIRIPASDIEGTMTSRVKEMLSKVELSVSSYDTAWVAMVPTLDSSKQPLFPKSLKWIMENQQPDGSWGLDLSHPLLIKDSLSSTLACVLALQKWNVGQQLVHKGLDFVQSNIWAATDEHQRSPIGFDMIFPSMIEYGRDMGLNLSLNQSLVEAMLLKRDLETKRLFYYLKDKPSNLAYVAEGLNTLNDWKEVMKFQRSNGSLFNSPSSTAAALIHLHDGKCFEYLNSLTKKFGNAVPTIYPFDIYARLFVIDSLEKLGIDRYVREDKEKMLDDIYRCWMQGSEEIFSDPTCCAMAFRILRTNGYAISSDALANFDEKESLFYEKDAKSTLELFKASQTTIFQDEPVLDKINAWTSTYLEKELRDGTIPDKSLHAEVDYALKHIQANLVRLEHRSYIENYNVDNVSLLKASYRFCNVDNRDLLTFSFQDYNMCQSMHRKELDYLEGWIKKCGIDQLEYARQTIKYAAFSIASSIFQPKFSDGRISWAQNSVLTTIVDDFFDYGGSMEELVNLIELVQRWDDHTTIGYKSKEVEILFNAVYSTTNDLADKARILQGRCVKKHMIDSWIFLLKAMLKEAEWARNKIVPTMDDFIPNGYISFALGPIILTSLYLVEPLSEEAVNSEEYEKLYMVISILGRLINDRVATQSDGAQGKLNIVTLEVINGKGAITEEEVQEKVARTIDSNRRELLRMVSQTEGSIVPKACKDFFWTMSNVLHLFYMGDDGYSSPTKMMSAVNAVINEPIVLP.

The transit peptide at 1-37 (MLLTCTNSLKISSQAKEWESKTLTGMSLEQLNKRIRI) directs the protein to the chloroplast. Asp529, Asp533, Asn672, Asp673, and Asp680 together coordinate Mg(2+). Residues 529-533 (DDFFD) carry the DDXXD motif motif.

It belongs to the terpene synthase family. It depends on Mg(2+) as a cofactor.

It is found in the plastid. The protein resides in the chloroplast. It carries out the reaction ent-copalyl diphosphate = ent-trachylobane + diphosphate. The catalysed reaction is ent-copalyl diphosphate = ent-kaur-16-ene + diphosphate. The protein operates within secondary metabolite biosynthesis; terpenoid biosynthesis. Functionally, diterpene cyclase involved in the biosynthesis of labdane-related diterpenoids (LRDs) natural products. Catalyzes the cyclization of ent-CDP into ent-trachylobane as a major and ent-kaurene as a minor product. The chain is Ent-trachylobane synthase KSL2, chloroplastic from Ricinus communis (Castor bean).